We begin with the raw amino-acid sequence, 545 residues long: Chaperonin GroEL 2 (545 aa).

ATP contacts are provided by residues 29–32, 86–90, G413, 479–481, and D495; these read TLGP, DGTTT, and NAA.

This sequence belongs to the chaperonin (HSP60) family. As to quaternary structure, forms a cylinder of 14 subunits composed of two heptameric rings stacked back-to-back. Interacts with the co-chaperonin GroES.

The protein localises to the cytoplasm. The catalysed reaction is ATP + H2O + a folded polypeptide = ADP + phosphate + an unfolded polypeptide.. In terms of biological role, together with its co-chaperonin GroES, plays an essential role in assisting protein folding. The GroEL-GroES system forms a nano-cage that allows encapsulation of the non-native substrate proteins and provides a physical environment optimized to promote and accelerate protein folding. In Prochlorococcus marinus (strain MIT 9312), this protein is Chaperonin GroEL 2.